The following is a 222-amino-acid chain: MSYKLMLVENDIVLSKAIQEYLIDQGFNVYIANNGLEALNLAYQYNFDLIISDIMMPLVNGYELLAKLKKNKALSKIPVIFLTAKGMTKDRIKGYDMGCYGYLSKPFDPNELLSIINNLIARDVLKEASLQNSATSNQQLNHKIRLTPREKSILDLVVDGLTNKEISTILNTSVRNVEKYVSRLLHKTNMKNRTLLVKYSINNNLLNNEINERANDGTRTRE.

Positions 4 to 120 (KLMLVENDIV…ELLSIINNLI (117 aa)) constitute a Response regulatory domain. Asp53 carries the 4-aspartylphosphate modification. Positions 139–204 (QLNHKIRLTP…LLVKYSINNN (66 aa)) constitute an HTH luxR-type domain. Positions 163–182 (NKEISTILNTSVRNVEKYVS) form a DNA-binding region, H-T-H motif.

The protein localises to the plastid. It is found in the chloroplast. The protein is Probable transcriptional regulator ycf29 (ycf29) of Pyropia yezoensis (Susabi-nori).